The chain runs to 404 residues: Nicotinate phosphoribosyltransferase (404 aa).

His225 bears the Phosphohistidine; by autocatalysis mark.

This sequence belongs to the NAPRTase family. Transiently phosphorylated on a His residue during the reaction cycle. Phosphorylation strongly increases the affinity for substrates and increases the rate of nicotinate D-ribonucleotide production. Dephosphorylation regenerates the low-affinity form of the enzyme, leading to product release.

It catalyses the reaction nicotinate + 5-phospho-alpha-D-ribose 1-diphosphate + ATP + H2O = nicotinate beta-D-ribonucleotide + ADP + phosphate + diphosphate. Its pathway is cofactor biosynthesis; NAD(+) biosynthesis; nicotinate D-ribonucleotide from nicotinate: step 1/1. Catalyzes the synthesis of beta-nicotinate D-ribonucleotide from nicotinate and 5-phospho-D-ribose 1-phosphate at the expense of ATP. The polypeptide is Nicotinate phosphoribosyltransferase (Methanosarcina acetivorans (strain ATCC 35395 / DSM 2834 / JCM 12185 / C2A)).